Reading from the N-terminus, the 181-residue chain is Endoglucanase (181 aa).

Cysteine 4 and cysteine 16 form a disulfide bridge. Residue aspartate 24 is the Nucleophile of the active site. 5 disulfide bridges follow: cysteine 30-cysteine 69, cysteine 32-cysteine 176, cysteine 65-cysteine 178, cysteine 72-cysteine 157, and cysteine 103-cysteine 113. Aspartate 132 acts as the Proton donor in catalysis.

As to expression, digestive gland.

It carries out the reaction Endohydrolysis of (1-&gt;4)-beta-D-glucosidic linkages in cellulose, lichenin and cereal beta-D-glucans.. Its function is as follows. Active towards the soluble carboxymethylcellulose (CMC). Possesses expansin activity too. The chain is Endoglucanase from Mytilus edulis (Blue mussel).